Here is a 111-residue protein sequence, read N- to C-terminus: Cell division topological specificity factor (111 aa).

It belongs to the MinE family.

Its function is as follows. Prevents the cell division inhibition by proteins MinC and MinD at internal division sites while permitting inhibition at polar sites. This ensures cell division at the proper site by restricting the formation of a division septum at the midpoint of the long axis of the cell. The chain is Cell division topological specificity factor from Prochlorococcus marinus (strain MIT 9312).